An 85-amino-acid chain; its full sequence is RNA-binding protein Hfq (85 aa).

A Sm domain is found at 9 to 68 (DPFLNALRRERIPVSIYLVNGIKLQGQIESFDQFVVLLKNTVSQMVYKHAISTVVPARIP).

Belongs to the Hfq family. Homohexamer.

RNA chaperone that binds small regulatory RNA (sRNAs) and mRNAs to facilitate mRNA translational regulation in response to envelope stress, environmental stress and changes in metabolite concentrations. Also binds with high specificity to tRNAs. This is RNA-binding protein Hfq from Idiomarina loihiensis (strain ATCC BAA-735 / DSM 15497 / L2-TR).